Reading from the N-terminus, the 82-residue chain is uncharacterized protein (82 aa).

2 helical membrane passes run 22 to 39 and 46 to 65; these read WASD…MFIA and LKMG…TWVI.

It localises to the cell membrane. This is an uncharacterized protein from Bacillus subtilis (strain 168).